Here is a 207-residue protein sequence, read N- to C-terminus: ADP-ribosylation factor (207 aa).

Glycine 2 carries the N-myristoyl glycine lipid modification. GTP is bound by residues 32–39 (GLDGAGKT), 75–79 (DIGGQ), and 133–136 (NKID).

It belongs to the small GTPase superfamily. Arf family.

It is found in the golgi apparatus. Its function is as follows. GTP-binding protein involved in protein trafficking; may modulate vesicle budding and uncoating within the Golgi apparatus. The polypeptide is ADP-ribosylation factor (ARF-1) (Encephalitozoon cuniculi (strain GB-M1) (Microsporidian parasite)).